Here is a 159-residue protein sequence, read N- to C-terminus: Ribosomal RNA large subunit methyltransferase H (159 aa).

S-adenosyl-L-methionine contacts are provided by residues Leu-76, Gly-108, and 127–132; that span reads FSKMTF.

This sequence belongs to the RNA methyltransferase RlmH family. Homodimer.

It localises to the cytoplasm. It carries out the reaction pseudouridine(1915) in 23S rRNA + S-adenosyl-L-methionine = N(3)-methylpseudouridine(1915) in 23S rRNA + S-adenosyl-L-homocysteine + H(+). In terms of biological role, specifically methylates the pseudouridine at position 1915 (m3Psi1915) in 23S rRNA. This Clostridium tetani (strain Massachusetts / E88) protein is Ribosomal RNA large subunit methyltransferase H.